Reading from the N-terminus, the 362-residue chain is Probable dual-specificity RNA methyltransferase RlmN (362 aa).

The active-site Proton acceptor is the glutamate 105. A Radical SAM core domain is found at 111–344; the sequence is HEYGNSICVT…VTIRREQGHD (234 aa). Cysteines 118 and 349 form a disulfide. [4Fe-4S] cluster is bound by residues cysteine 125, cysteine 129, and cysteine 132. S-adenosyl-L-methionine contacts are provided by residues 175 to 176, serine 207, 230 to 232, and asparagine 306; these read GE and SLH. Cysteine 349 acts as the S-methylcysteine intermediate in catalysis.

Belongs to the radical SAM superfamily. RlmN family. [4Fe-4S] cluster serves as cofactor.

The protein localises to the cytoplasm. It carries out the reaction adenosine(2503) in 23S rRNA + 2 reduced [2Fe-2S]-[ferredoxin] + 2 S-adenosyl-L-methionine = 2-methyladenosine(2503) in 23S rRNA + 5'-deoxyadenosine + L-methionine + 2 oxidized [2Fe-2S]-[ferredoxin] + S-adenosyl-L-homocysteine. It catalyses the reaction adenosine(37) in tRNA + 2 reduced [2Fe-2S]-[ferredoxin] + 2 S-adenosyl-L-methionine = 2-methyladenosine(37) in tRNA + 5'-deoxyadenosine + L-methionine + 2 oxidized [2Fe-2S]-[ferredoxin] + S-adenosyl-L-homocysteine. Its function is as follows. Specifically methylates position 2 of adenine 2503 in 23S rRNA and position 2 of adenine 37 in tRNAs. This is Probable dual-specificity RNA methyltransferase RlmN from Bacillus cereus (strain ATCC 14579 / DSM 31 / CCUG 7414 / JCM 2152 / NBRC 15305 / NCIMB 9373 / NCTC 2599 / NRRL B-3711).